Reading from the N-terminus, the 298-residue chain is uncharacterized protein (298 aa).

The protein localises to the cytoplasm. The protein resides in the nucleus. This is an uncharacterized protein from Schizosaccharomyces pombe (strain 972 / ATCC 24843) (Fission yeast).